The primary structure comprises 140 residues: Putative pre-16S rRNA nuclease (140 aa).

It belongs to the YqgF nuclease family.

The protein localises to the cytoplasm. Could be a nuclease involved in processing of the 5'-end of pre-16S rRNA. This Mycoplasma pneumoniae (strain ATCC 29342 / M129 / Subtype 1) (Mycoplasmoides pneumoniae) protein is Putative pre-16S rRNA nuclease.